A 68-amino-acid polypeptide reads, in one-letter code: Conotoxin Cal12.1p1 (68 aa).

Residues 1–23 (DLITNSYTRGKPRHVTSWRNLRT) constitute a propeptide that is removed on maturation.

In terms of processing, contains 4 disulfide bonds. Expressed by the venom duct.

Its subcellular location is the secreted. The chain is Conotoxin Cal12.1p1 from Californiconus californicus (California cone).